Consider the following 121-residue polypeptide: Large ribosomal subunit protein uL14c (121 aa).

Belongs to the universal ribosomal protein uL14 family. Part of the 50S ribosomal subunit.

Its subcellular location is the plastid. It localises to the chloroplast. Its function is as follows. Binds to 23S rRNA. The polypeptide is Large ribosomal subunit protein uL14c (Tetradesmus obliquus (Green alga)).